We begin with the raw amino-acid sequence, 401 residues long: Mu-type opioid receptor (401 aa).

The Extracellular segment spans residues 1–69; that stretch reads MDSSADPRNA…CPPTGSPSMV (69 aa). 5 N-linked (GlcNAc...) asparagine glycosylation sites follow: Asn-9, Asn-12, Asn-34, Asn-41, and Asn-49. A helical membrane pass occupies residues 70-94; it reads TAITIMALYSIVCVVGLFGNFLVMY. The Cytoplasmic segment spans residues 95-107; it reads VIVRYTKMKTATN. Residues 108–132 form a helical membrane-spanning segment; sequence IYIFNLALADALATSTLPFQSVNYL. Residues 133-143 are Extracellular-facing; it reads MGTWPFGTILC. Cys-143 and Cys-220 are oxidised to a cystine. The chain crosses the membrane as a helical span at residues 144–166; the sequence is KIVISIDYYNMFTSIFTLCTMSV. Residues 167 to 186 are Cytoplasmic-facing; the sequence is DRYIAVCHPVKALDFRTPRN. Tyr-169 is modified (phosphotyrosine). Residues 187–208 form a helical membrane-spanning segment; sequence AKIINVCNWILSSAIGLPVMFM. Residues 209–231 lie on the Extracellular side of the membrane; that stretch reads ATTKYRNGSIDCALTFSHPTWYW. Residues 232 to 256 traverse the membrane as a helical segment; it reads ENLLKICVFIFAFIMPVLIITVCYG. The Cytoplasmic portion of the chain corresponds to 257 to 280; the sequence is LMILRLKSVRMLSGSKEKDRNLRR. Residues 281-307 traverse the membrane as a helical segment; it reads ITRMVLVVVAVFIVCWTPIHIYVIIKA. The Extracellular segment spans residues 308–315; it reads LITIPETT. Residues 316–339 form a helical membrane-spanning segment; sequence FQTVSWHFCIALGYTNSCLNPVLY. The NPxxY; plays a role in stabilizing the activated conformation of the receptor signature appears at 335-339; it reads NPVLY. The Cytoplasmic segment spans residues 340-401; that stretch reads AFLDENFKRC…NLEAETAPLP (62 aa). Cys-354 carries the S-palmitoyl cysteine lipid modification. Residues 365–385 form a disordered region; sequence NSARIRQNTRDHPSTANTVDR. The residue at position 366 (Ser-366) is a Phosphoserine. The residue at position 373 (Thr-373) is a Phosphothreonine. Residue Ser-378 is modified to Phosphoserine. Thr-397 is modified (phosphothreonine).

It belongs to the G-protein coupled receptor 1 family. In terms of assembly, forms homooligomers and heterooligomers with other GPCRs, such as OPRD1, OPRK1, OPRL1, NPFFR2, ADRA2A, SSTR2, CNR1 and CCR5 (probably in dimeric forms). Interacts with heterotrimeric G proteins; interaction with a heterotrimeric complex containing GNAI1, GNB1 and GNG2 stabilizes the active conformation of the receptor and increases its affinity for endomorphin-2, the synthetic opioid peptide DAMGO and for morphinan agonists. Interacts with PPL; the interaction disrupts agonist-mediated G-protein activation. Interacts (via C-terminus) with DNAJB4 (via C-terminus). Interacts with calmodulin; the interaction inhibits the constitutive activity of OPRM1; it abolishes basal and attenuates agonist-stimulated G-protein coupling. Interacts with FLNA, PLD2, RANBP9 and WLS and GPM6A. Interacts with RTP4. Interacts with SYP and GNAS. Interacts with RGS9, RGS17, RGS20, RGS4, PPP1R9B and HINT1. In terms of processing, phosphorylated. Differentially phosphorylated in basal and agonist-induced conditions. Agonist-mediated phosphorylation modulates receptor internalization. Phosphorylated by GRK2 in a agonist-dependent manner. Phosphorylation at Tyr-169 requires receptor activation, is dependent on non-receptor protein tyrosine kinase Src and results in a decrease in agonist efficacy by reducing G-protein coupling efficiency. Phosphorylated on tyrosine residues; the phosphorylation is involved in agonist-induced G-protein-independent receptor down-regulation. Phosphorylation at Ser-378 is involved in G-protein-dependent but not beta-arrestin-dependent activation of the ERK pathway. Ubiquitinated. A basal ubiquitination seems not to be related to degradation. Ubiquitination is increased upon formation of OPRM1:OPRD1 oligomers leading to proteasomal degradation; the ubiquitination is diminished by RTP4.

The protein localises to the cell membrane. Its subcellular location is the cell projection. The protein resides in the axon. It is found in the perikaryon. It localises to the dendrite. The protein localises to the endosome. Its function is as follows. Receptor for endogenous opioids such as beta-endorphin and endomorphin. Receptor for natural and synthetic opioids including morphine, heroin, DAMGO, fentanyl, etorphine, buprenorphin and methadone. Also activated by enkephalin peptides, such as Met-enkephalin or Met-enkephalin-Arg-Phe, with higher affinity for Met-enkephalin-Arg-Phe. Agonist binding to the receptor induces coupling to an inactive GDP-bound heterotrimeric G-protein complex and subsequent exchange of GDP for GTP in the G-protein alpha subunit leading to dissociation of the G-protein complex with the free GTP-bound G-protein alpha and the G-protein beta-gamma dimer activating downstream cellular effectors. The agonist- and cell type-specific activity is predominantly coupled to pertussis toxin-sensitive G(i) and G(o) G alpha proteins, GNAI1, GNAI2, GNAI3 and GNAO1, and to a lesser extent to pertussis toxin-insensitive G alpha proteins GNAZ and GNA15. They mediate an array of downstream cellular responses, including inhibition of adenylate cyclase activity and both N-type and L-type calcium channels, activation of inward rectifying potassium channels, mitogen-activated protein kinase (MAPK), phospholipase C (PLC), phosphoinositide/protein kinase (PKC), phosphoinositide 3-kinase (PI3K) and regulation of NF-kappa-B. Also couples to adenylate cyclase stimulatory G alpha proteins. The selective temporal coupling to G-proteins and subsequent signaling can be regulated by RGSZ proteins, such as RGS9, RGS17 and RGS4. Phosphorylation by members of the GPRK subfamily of Ser/Thr protein kinases and association with beta-arrestins is involved in short-term receptor desensitization. Beta-arrestins associate with the GPRK-phosphorylated receptor and uncouple it from the G-protein thus terminating signal transduction. The phosphorylated receptor is internalized through endocytosis via clathrin-coated pits which involves beta-arrestins. The activation of the ERK pathway occurs either in a G-protein-dependent or a beta-arrestin-dependent manner and is regulated by agonist-specific receptor phosphorylation. Acts as a class A G-protein coupled receptor (GPCR) which dissociates from beta-arrestin at or near the plasma membrane and undergoes rapid recycling. Receptor down-regulation pathways are varying with the agonist and occur dependent or independent of G-protein coupling. Endogenous ligands induce rapid desensitization, endocytosis and recycling. Heterooligomerization with other GPCRs can modulate agonist binding, signaling and trafficking properties. Involved in neurogenesis. The protein is Mu-type opioid receptor (OPRM1) of Sus scrofa (Pig).